The primary structure comprises 380 residues: Succinyl-diaminopimelate desuccinylase (380 aa).

His-69 provides a ligand contact to Zn(2+). Residue Asp-71 is part of the active site. Residue Asp-102 participates in Zn(2+) binding. The active-site Proton acceptor is Glu-135. Positions 136, 164, and 353 each coordinate Zn(2+).

Belongs to the peptidase M20A family. DapE subfamily. As to quaternary structure, homodimer. Requires Zn(2+) as cofactor. Co(2+) is required as a cofactor.

It carries out the reaction N-succinyl-(2S,6S)-2,6-diaminopimelate + H2O = (2S,6S)-2,6-diaminopimelate + succinate. Its pathway is amino-acid biosynthesis; L-lysine biosynthesis via DAP pathway; LL-2,6-diaminopimelate from (S)-tetrahydrodipicolinate (succinylase route): step 3/3. Catalyzes the hydrolysis of N-succinyl-L,L-diaminopimelic acid (SDAP), forming succinate and LL-2,6-diaminopimelate (DAP), an intermediate involved in the bacterial biosynthesis of lysine and meso-diaminopimelic acid, an essential component of bacterial cell walls. The protein is Succinyl-diaminopimelate desuccinylase of Cereibacter sphaeroides (strain ATCC 17029 / ATH 2.4.9) (Rhodobacter sphaeroides).